The primary structure comprises 422 residues: Gamma-glutamyl phosphate reductase (422 aa).

Belongs to the gamma-glutamyl phosphate reductase family.

The protein resides in the cytoplasm. It catalyses the reaction L-glutamate 5-semialdehyde + phosphate + NADP(+) = L-glutamyl 5-phosphate + NADPH + H(+). The protein operates within amino-acid biosynthesis; L-proline biosynthesis; L-glutamate 5-semialdehyde from L-glutamate: step 2/2. Functionally, catalyzes the NADPH-dependent reduction of L-glutamate 5-phosphate into L-glutamate 5-semialdehyde and phosphate. The product spontaneously undergoes cyclization to form 1-pyrroline-5-carboxylate. In Shewanella piezotolerans (strain WP3 / JCM 13877), this protein is Gamma-glutamyl phosphate reductase.